The primary structure comprises 393 residues: Adaptive-response sensory kinase SasA (393 aa).

Residues 171-393 (MLAHDLRSPL…CFHFTLPVFR (223 aa)) enclose the Histidine kinase domain. The residue at position 174 (histidine 174) is a Phosphohistidine; by autocatalysis.

Homooligomerizes. Interacts with KaiC. Participates in the KaiABC clock complex, whose core is composed of a KaiC homohexamer, 6 KaiB and up to 6 KaiA dimers. SasA and KaiB(fs) compete to bind to KaiC.

The enzyme catalyses ATP + protein L-histidine = ADP + protein N-phospho-L-histidine.. Its function is as follows. Member of the two-component regulatory system SasA/RpaA involved in genome-wide circadian gene expression. One of several clock output pathways. Participates in the Kai clock protein complex, the main circadian regulator in cyanobacteria, via its interaction with KaiC. KaiC enhances the autophosphorylation activity of SasA, which then transfers its phosphate group to RpaA to activate it. In addition to its output function, recruits fold-shifted KaiB (KaiB(fs)) to KaiC to cooperatively form the KaiB(6):KaiC(6) complex (independent of SasA kinase activity). Required for robustness of the circadian rhythm of gene expression and is involved in clock output, also required for adaptation to light/dark cycles. This Gloeothece citriformis (strain PCC 7424) (Cyanothece sp. (strain PCC 7424)) protein is Adaptive-response sensory kinase SasA.